Reading from the N-terminus, the 170-residue chain is uncharacterized protein (170 aa).

An N-terminal signal peptide occupies residues Met-1–Ala-26.

This is an uncharacterized protein from Bacillus subtilis (strain 168).